A 643-amino-acid polypeptide reads, in one-letter code: Threonine--tRNA ligase (643 aa).

Residues 1-61 (MPIITLPDGS…TEDSKLEIIT (61 aa)) form the TGS domain. Positions 243–534 (DHRKIGKALD…ITEEYAGFFP (292 aa)) are catalytic. Zn(2+) contacts are provided by Cys334, His385, and His511.

The protein belongs to the class-II aminoacyl-tRNA synthetase family. Homodimer. Zn(2+) is required as a cofactor.

It localises to the cytoplasm. It catalyses the reaction tRNA(Thr) + L-threonine + ATP = L-threonyl-tRNA(Thr) + AMP + diphosphate + H(+). Functionally, catalyzes the attachment of threonine to tRNA(Thr) in a two-step reaction: L-threonine is first activated by ATP to form Thr-AMP and then transferred to the acceptor end of tRNA(Thr). Also edits incorrectly charged L-seryl-tRNA(Thr). This chain is Threonine--tRNA ligase, found in Pasteurella multocida (strain Pm70).